The chain runs to 267 residues: Ribosomal RNA small subunit methyltransferase J (267 aa).

S-adenosyl-L-methionine is bound by residues 133-134 and D187; that span reads ER.

This sequence belongs to the methyltransferase superfamily. RsmJ family.

It localises to the cytoplasm. It carries out the reaction guanosine(1516) in 16S rRNA + S-adenosyl-L-methionine = N(2)-methylguanosine(1516) in 16S rRNA + S-adenosyl-L-homocysteine + H(+). In terms of biological role, specifically methylates the guanosine in position 1516 of 16S rRNA. The chain is Ribosomal RNA small subunit methyltransferase J from Halorhodospira halophila (strain DSM 244 / SL1) (Ectothiorhodospira halophila (strain DSM 244 / SL1)).